The primary structure comprises 384 residues: Putative glycosyltransferase EpsF (384 aa).

It belongs to the glycosyltransferase group 1 family. Glycosyltransferase 4 subfamily.

In terms of biological role, may be involved in the production of the exopolysaccharide (EPS) component of the extracellular matrix during biofilm formation. EPS is responsible for the adhesion of chains of cells into bundles. Required for biofilm maintenance. The polypeptide is Putative glycosyltransferase EpsF (epsF) (Bacillus subtilis (strain 168)).